Reading from the N-terminus, the 105-residue chain is Pyrimidine/purine nucleoside phosphorylase (105 aa).

The protein belongs to the nucleoside phosphorylase PpnP family.

It carries out the reaction a purine D-ribonucleoside + phosphate = a purine nucleobase + alpha-D-ribose 1-phosphate. The enzyme catalyses adenosine + phosphate = alpha-D-ribose 1-phosphate + adenine. The catalysed reaction is cytidine + phosphate = cytosine + alpha-D-ribose 1-phosphate. It catalyses the reaction guanosine + phosphate = alpha-D-ribose 1-phosphate + guanine. It carries out the reaction inosine + phosphate = alpha-D-ribose 1-phosphate + hypoxanthine. The enzyme catalyses thymidine + phosphate = 2-deoxy-alpha-D-ribose 1-phosphate + thymine. The catalysed reaction is uridine + phosphate = alpha-D-ribose 1-phosphate + uracil. It catalyses the reaction xanthosine + phosphate = alpha-D-ribose 1-phosphate + xanthine. Functionally, catalyzes the phosphorolysis of diverse nucleosides, yielding D-ribose 1-phosphate and the respective free bases. Can use uridine, adenosine, guanosine, cytidine, thymidine, inosine and xanthosine as substrates. Also catalyzes the reverse reactions. This chain is Pyrimidine/purine nucleoside phosphorylase, found in Paracidovorax citrulli (strain AAC00-1) (Acidovorax citrulli).